Consider the following 510-residue polypeptide: Light-independent protochlorophyllide reductase subunit B (510 aa).

[4Fe-4S] cluster is bound at residue Asp-36. Asp-296 acts as the Proton donor in catalysis. 431–432 (GM) is a substrate binding site.

It belongs to the ChlB/BchB/BchZ family. In terms of assembly, protochlorophyllide reductase is composed of three subunits; ChlL, ChlN and ChlB. Forms a heterotetramer of two ChlB and two ChlN subunits. [4Fe-4S] cluster serves as cofactor.

The protein localises to the plastid. Its subcellular location is the chloroplast. The enzyme catalyses chlorophyllide a + oxidized 2[4Fe-4S]-[ferredoxin] + 2 ADP + 2 phosphate = protochlorophyllide a + reduced 2[4Fe-4S]-[ferredoxin] + 2 ATP + 2 H2O. It participates in porphyrin-containing compound metabolism; chlorophyll biosynthesis (light-independent). Its function is as follows. Component of the dark-operative protochlorophyllide reductase (DPOR) that uses Mg-ATP and reduced ferredoxin to reduce ring D of protochlorophyllide (Pchlide) to form chlorophyllide a (Chlide). This reaction is light-independent. The NB-protein (ChlN-ChlB) is the catalytic component of the complex. This chain is Light-independent protochlorophyllide reductase subunit B, found in Physcomitrium patens (Spreading-leaved earth moss).